Here is a 208-residue protein sequence, read N- to C-terminus: Interleukin-6 (208 aa).

The N-terminal stretch at 1-27 (MTFLSTSAFSPLAFSLGLLLVVATAFP) is a signal peptide. An intrachain disulfide couples cysteine 68 to cysteine 74. Serine 77 carries the post-translational modification Phosphoserine. Cysteine 97 and cysteine 107 form a disulfide bridge.

The protein belongs to the IL-6 superfamily. As to quaternary structure, component of a hexamer of two molecules each of IL6, IL6R and IL6ST; first binds to IL6R to associate with the signaling subunit IL6ST. Interacts with IL6R (via the N-terminal ectodomain); this interaction may be affected by IL6R-binding with SORL1, hence decreasing IL6 cis signaling. Interacts with SORL1 (via the N-terminal ectodomain); this interaction leads to IL6 internalization and lysosomal degradation. May form a trimeric complex with the soluble SORL1 ectodomain and soluble IL6R receptor; this interaction might stabilize circulating IL6, hence promoting IL6 trans signaling.

The protein resides in the secreted. Cytokine with a wide variety of biological functions in immunity, tissue regeneration, and metabolism. Binds to IL6R, then the complex associates to the signaling subunit IL6ST/gp130 to trigger the intracellular IL6-signaling pathway. The interaction with the membrane-bound IL6R and IL6ST stimulates 'classic signaling', whereas the binding of IL6 and soluble IL6R to IL6ST stimulates 'trans-signaling'. Alternatively, 'cluster signaling' occurs when membrane-bound IL6:IL6R complexes on transmitter cells activate IL6ST receptors on neighboring receiver cells. In terms of biological role, IL6 is a potent inducer of the acute phase response. Rapid production of IL6 contributes to host defense during infection and tissue injury, but excessive IL6 synthesis is involved in disease pathology. In the innate immune response, is synthesized by myeloid cells, such as macrophages and dendritic cells, upon recognition of pathogens through toll-like receptors (TLRs) at the site of infection or tissue injury. In the adaptive immune response, is required for the differentiation of B cells into immunoglobulin-secreting cells. Plays a major role in the differentiation of CD4(+) T cell subsets. Essential factor for the development of T follicular helper (Tfh) cells that are required for the induction of germinal-center formation. Required to drive naive CD4(+) T cells to the Th17 lineage. Also required for proliferation of myeloma cells and the survival of plasmablast cells. Its function is as follows. Acts as an essential factor in bone homeostasis and on vessels directly or indirectly by induction of VEGF, resulting in increased angiogenesis activity and vascular permeability. Induces, through 'trans-signaling' and synergistically with IL1B and TNF, the production of VEGF. Involved in metabolic controls, is discharged into the bloodstream after muscle contraction increasing lipolysis and improving insulin resistance. 'Trans-signaling' in central nervous system also regulates energy and glucose homeostasis. Mediates, through GLP-1, crosstalk between insulin-sensitive tissues, intestinal L cells and pancreatic islets to adapt to changes in insulin demand. Also acts as a myokine. Plays a protective role during liver injury, being required for maintenance of tissue regeneration. Also has a pivotal role in iron metabolism by regulating HAMP/hepcidin expression upon inflammation or bacterial infection. Through activation of IL6ST-YAP-NOTCH pathway, induces inflammation-induced epithelial regeneration. The chain is Interleukin-6 (IL6) from Felis catus (Cat).